The following is a 475-amino-acid chain: Gustatory and pheromone receptor 33a (475 aa).

At 1-34 (MIQIMNWFSMVIGLIPLNRQQSETNFILDYAMMC) the chain is on the cytoplasmic side. The chain crosses the membrane as a helical span at residues 35-55 (IVPIFYVACYLLINLSHIIGL). Residues 56–68 (CLLDSCNSVCKLS) are Extracellular-facing. The chain crosses the membrane as a helical span at residues 69–89 (SHLFMHLGAFLYLTITLLSLY). Topologically, residues 90–128 (RRKEFFQQFDARLNDIDAVIQKCQRVAEMDKVKVTAVKH) are cytoplasmic. A helical membrane pass occupies residues 129–149 (SVAYHFTWLFLFCVFTFALYY). Residues 150–158 (DVRSLYLTF) are Extracellular-facing. A helical membrane pass occupies residues 159 to 179 (GNLAFIPFMVSSFPYLAGSII). The Cytoplasmic portion of the chain corresponds to 180-319 (QGEFIYHVSV…LALSVITNGE (140 aa)). The segment at 243–281 (TGFGNENKFAGEMKRQEGQQKNDDDDLDTSNDEDEDDFD) is disordered. The span at 251–264 (FAGEMKRQEGQQKN) shows a compositional bias: basic and acidic residues. Acidic residues predominate over residues 265–281 (DDDDLDTSNDEDEDDFD). The helical transmembrane segment at 320 to 340 (FGPQCVPYMAACFVVSIFGIF) threads the bilayer. Over 341–357 (LETKVNFIVGGKSRLLD) the chain is Extracellular. The helical transmembrane segment at 358-378 (YMTYLYVIWSFTTMMVAYIVL) threads the bilayer. The Cytoplasmic portion of the chain corresponds to 379-441 (RLCCNANNHS…FNGVGLFALD (63 aa)). A helical transmembrane segment spans residues 442–462 (YTFIFSTVSAATSYLIVLLQF). The Extracellular segment spans residues 463–475 (DMTAILRNEGLMS).

This sequence belongs to the insect chemoreceptor superfamily. Gustatory receptor (GR) family. Gr66a subfamily. In terms of tissue distribution, expressed widely in gustatory receptor neurons (GRNs) that respond to aversive chemicals. In larvae, is expressed in neurons of the terminal external chemosensory organ, and the dorsal, ventral and posterior external chemosensory organs.

The protein localises to the cell membrane. Functionally, gustatory receptor which mediates acceptance or avoidance behavior, depending on its substrates. Required for sensing all nonvolatile repulsive chemicals, including tastants, pheromones, and especially N,N-Diethyl-meta-toluamide (DEET), the most widely used insect repellent worldwide. Also functions as a pheromone receptor for a male inhibitory pheromone leading to male-male courtship suppression. The protein is Gustatory and pheromone receptor 33a (Gr33a) of Drosophila melanogaster (Fruit fly).